A 204-amino-acid polypeptide reads, in one-letter code: Holliday junction branch migration complex subunit RuvA (204 aa).

The domain I stretch occupies residues 1-64 (MIGRLQGKLI…EDAHLLFGFS (64 aa)). Positions 65–143 (TKTDRTLFRE…GLRQPDFFVE (79 aa)) are domain II. The interval 144–155 (SKHITVPDIVSA) is flexible linker. Residues 156–204 (EKETPNDEAVAALVALGYKPPEAAKMVKKVANGDLTSEQLIREALKAAL) are domain III.

It belongs to the RuvA family. In terms of assembly, homotetramer. Forms an RuvA(8)-RuvB(12)-Holliday junction (HJ) complex. HJ DNA is sandwiched between 2 RuvA tetramers; dsDNA enters through RuvA and exits via RuvB. An RuvB hexamer assembles on each DNA strand where it exits the tetramer. Each RuvB hexamer is contacted by two RuvA subunits (via domain III) on 2 adjacent RuvB subunits; this complex drives branch migration. In the full resolvosome a probable DNA-RuvA(4)-RuvB(12)-RuvC(2) complex forms which resolves the HJ.

It is found in the cytoplasm. In terms of biological role, the RuvA-RuvB-RuvC complex processes Holliday junction (HJ) DNA during genetic recombination and DNA repair, while the RuvA-RuvB complex plays an important role in the rescue of blocked DNA replication forks via replication fork reversal (RFR). RuvA specifically binds to HJ cruciform DNA, conferring on it an open structure. The RuvB hexamer acts as an ATP-dependent pump, pulling dsDNA into and through the RuvAB complex. HJ branch migration allows RuvC to scan DNA until it finds its consensus sequence, where it cleaves and resolves the cruciform DNA. The sequence is that of Holliday junction branch migration complex subunit RuvA from Actinobacillus succinogenes (strain ATCC 55618 / DSM 22257 / CCUG 43843 / 130Z).